The sequence spans 1129 residues: Phytochrome A (1129 aa).

The GAF domain occupies 217-399 (SMERLCDTMV…VFAIHVSKEL (183 aa)). Residue Cys-322 coordinates phytochromobilin. 2 consecutive PAS domains span residues 622–692 (VTSE…LQGK) and 755–826 (DYKA…VNLG). One can recognise a Histidine kinase domain in the interval 906-1123 (YLRRQAKNPL…TFIITVELAA (218 aa)).

It belongs to the phytochrome family. As to quaternary structure, homodimer. Post-translationally, contains one covalently linked phytochromobilin chromophore.

Its function is as follows. Regulatory photoreceptor which exists in two forms that are reversibly interconvertible by light: the Pr form that absorbs maximally in the red region of the spectrum and the Pfr form that absorbs maximally in the far-red region. Photoconversion of Pr to Pfr induces an array of morphogenic responses, whereas reconversion of Pfr to Pr cancels the induction of those responses. Pfr controls the expression of a number of nuclear genes including those encoding the small subunit of ribulose-bisphosphate carboxylase, chlorophyll A/B binding protein, protochlorophyllide reductase, rRNA, etc. It also controls the expression of its own gene(s) in a negative feedback fashion. The chain is Phytochrome A (PHYA) from Petroselinum crispum (Parsley).